Consider the following 270-residue polypeptide: ATP synthase subunit a (270 aa).

Transmembrane regions (helical) follow at residues 37-57 (NVHI…LGVF), 98-118 (IAPL…MDLV), 143-163 (DVNI…YYSI), 208-228 (LFGN…MLPW), and 239-259 (AIFH…LTIV).

The protein belongs to the ATPase A chain family. In terms of assembly, F-type ATPases have 2 components, CF(1) - the catalytic core - and CF(0) - the membrane proton channel. CF(1) has five subunits: alpha(3), beta(3), gamma(1), delta(1), epsilon(1). CF(0) has three main subunits: a(1), b(2) and c(9-12). The alpha and beta chains form an alternating ring which encloses part of the gamma chain. CF(1) is attached to CF(0) by a central stalk formed by the gamma and epsilon chains, while a peripheral stalk is formed by the delta and b chains.

Its subcellular location is the cell inner membrane. Key component of the proton channel; it plays a direct role in the translocation of protons across the membrane. The polypeptide is ATP synthase subunit a (Vibrio cholerae serotype O1 (strain ATCC 39315 / El Tor Inaba N16961)).